The following is a 52-amino-acid chain: uncharacterized protein (52 aa).

A disordered region spans residues 1 to 52 (MSLRPCLTPSSMQYSDIYIPTPTPTHHTHTPTPHPHPHTHTHTHHNPNPTLF). Basic residues predominate over residues 35 to 45 (PHPHTHTHTHH).

This is an uncharacterized protein from Saccharomyces cerevisiae (strain ATCC 204508 / S288c) (Baker's yeast).